Consider the following 409-residue polypeptide: Tryptophan synthase beta chain (409 aa).

Position 98 is an N6-(pyridoxal phosphate)lysine (lysine 98).

It belongs to the TrpB family. As to quaternary structure, tetramer of two alpha and two beta chains. It depends on pyridoxal 5'-phosphate as a cofactor.

The catalysed reaction is (1S,2R)-1-C-(indol-3-yl)glycerol 3-phosphate + L-serine = D-glyceraldehyde 3-phosphate + L-tryptophan + H2O. It functions in the pathway amino-acid biosynthesis; L-tryptophan biosynthesis; L-tryptophan from chorismate: step 5/5. The beta subunit is responsible for the synthesis of L-tryptophan from indole and L-serine. The sequence is that of Tryptophan synthase beta chain (trpB) from Cereibacter sphaeroides (strain ATCC 17023 / DSM 158 / JCM 6121 / CCUG 31486 / LMG 2827 / NBRC 12203 / NCIMB 8253 / ATH 2.4.1.) (Rhodobacter sphaeroides).